The sequence spans 70 residues: Small ribosomal subunit protein bS21 (70 aa).

It belongs to the bacterial ribosomal protein bS21 family.

The protein is Small ribosomal subunit protein bS21 of Albidiferax ferrireducens (strain ATCC BAA-621 / DSM 15236 / T118) (Rhodoferax ferrireducens).